Here is a 142-residue protein sequence, read N- to C-terminus: Large ribosomal subunit protein uL11 (142 aa).

It belongs to the universal ribosomal protein uL11 family. As to quaternary structure, part of the ribosomal stalk of the 50S ribosomal subunit. Interacts with L10 and the large rRNA to form the base of the stalk. L10 forms an elongated spine to which L12 dimers bind in a sequential fashion forming a multimeric L10(L12)X complex. Post-translationally, one or more lysine residues are methylated.

In terms of biological role, forms part of the ribosomal stalk which helps the ribosome interact with GTP-bound translation factors. This Bradyrhizobium diazoefficiens (strain JCM 10833 / BCRC 13528 / IAM 13628 / NBRC 14792 / USDA 110) protein is Large ribosomal subunit protein uL11.